The chain runs to 757 residues: Xaa-Pro dipeptidyl-peptidase (757 aa).

Residues Ser348, Asp468, and His498 each act as charge relay system in the active site.

The protein belongs to the peptidase S15 family. In terms of assembly, homodimer.

It localises to the cytoplasm. The catalysed reaction is Hydrolyzes Xaa-Pro-|- bonds to release unblocked, N-terminal dipeptides from substrates including Ala-Pro-|-p-nitroanilide and (sequentially) Tyr-Pro-|-Phe-Pro-|-Gly-Pro-|-Ile.. Its function is as follows. Removes N-terminal dipeptides sequentially from polypeptides having unsubstituted N-termini provided that the penultimate residue is proline. The protein is Xaa-Pro dipeptidyl-peptidase of Streptococcus pneumoniae (strain ATCC BAA-255 / R6).